Consider the following 384-residue polypeptide: Bifunctional enzyme IspD/IspF (384 aa).

2-C-methyl-D-erythritol 4-phosphate cytidylyltransferase regions lie at residues 1-227 (MAKV…EGEQ) and 1-228 (MAKV…GEQR). The 2-C-methyl-D-erythritol 2,4-cyclodiphosphate synthase stretch occupies residues 228–384 (RIGSGFDVHR…QATALITLPF (157 aa)). Asp-234 and His-236 together coordinate a divalent metal cation. Residues 234 to 236 (DVH) and 260 to 261 (HS) contribute to the 4-CDP-2-C-methyl-D-erythritol 2-phosphate site. Residue His-268 coordinates a divalent metal cation. Residues 282–284 (DIG), 358–361 (TTTE), Phe-365, and Arg-368 each bind 4-CDP-2-C-methyl-D-erythritol 2-phosphate.

It in the N-terminal section; belongs to the IspD/TarI cytidylyltransferase family. IspD subfamily. This sequence in the C-terminal section; belongs to the IspF family. It depends on a divalent metal cation as a cofactor.

The catalysed reaction is 2-C-methyl-D-erythritol 4-phosphate + CTP + H(+) = 4-CDP-2-C-methyl-D-erythritol + diphosphate. It carries out the reaction 4-CDP-2-C-methyl-D-erythritol 2-phosphate = 2-C-methyl-D-erythritol 2,4-cyclic diphosphate + CMP. It participates in isoprenoid biosynthesis; isopentenyl diphosphate biosynthesis via DXP pathway; isopentenyl diphosphate from 1-deoxy-D-xylulose 5-phosphate: step 2/6. The protein operates within isoprenoid biosynthesis; isopentenyl diphosphate biosynthesis via DXP pathway; isopentenyl diphosphate from 1-deoxy-D-xylulose 5-phosphate: step 4/6. In terms of biological role, bifunctional enzyme that catalyzes the formation of 4-diphosphocytidyl-2-C-methyl-D-erythritol from CTP and 2-C-methyl-D-erythritol 4-phosphate (MEP) (IspD), and catalyzes the conversion of 4-diphosphocytidyl-2-C-methyl-D-erythritol 2-phosphate (CDP-ME2P) to 2-C-methyl-D-erythritol 2,4-cyclodiphosphate (ME-CPP) with a corresponding release of cytidine 5-monophosphate (CMP) (IspF). The polypeptide is Bifunctional enzyme IspD/IspF (Rhodospirillum rubrum (strain ATCC 11170 / ATH 1.1.1 / DSM 467 / LMG 4362 / NCIMB 8255 / S1)).